The sequence spans 283 residues: MSDRIAVLPQYLLPKQALTSFAGRMASARAGQLTTAVIRRFVARYGVDMSEAANPDIASYATFNDFFTRALRPGLRPLADAAVVCPVDGAVSQIGPIEQDQIFQAKGHLYSTAALLGGDAEMAAQFQDGSFATIYLSPRDYHRIHMPCDGRLVRMDHVPGALFSVNPTTARGVPGLFARNERVVCLFETPLGPMALVLVGATIVGSMATVWHGQVNPPRTGQPRRWDYGDREVVLRQGDEMGRFLLGSTVVLLFPRGAVQFMPGWEAARPVRLGEAMAHRCGI.

Active-site charge relay system; for autoendoproteolytic cleavage activity residues include Asp-88, His-145, and Ser-248. Ser-248 (schiff-base intermediate with substrate; via pyruvic acid; for decarboxylase activity) is an active-site residue. Ser-248 is subject to Pyruvic acid (Ser); by autocatalysis.

It belongs to the phosphatidylserine decarboxylase family. PSD-B subfamily. Prokaryotic type I sub-subfamily. As to quaternary structure, heterodimer of a large membrane-associated beta subunit and a small pyruvoyl-containing alpha subunit. It depends on pyruvate as a cofactor. Is synthesized initially as an inactive proenzyme. Formation of the active enzyme involves a self-maturation process in which the active site pyruvoyl group is generated from an internal serine residue via an autocatalytic post-translational modification. Two non-identical subunits are generated from the proenzyme in this reaction, and the pyruvate is formed at the N-terminus of the alpha chain, which is derived from the carboxyl end of the proenzyme. The autoendoproteolytic cleavage occurs by a canonical serine protease mechanism, in which the side chain hydroxyl group of the serine supplies its oxygen atom to form the C-terminus of the beta chain, while the remainder of the serine residue undergoes an oxidative deamination to produce ammonia and the pyruvoyl prosthetic group on the alpha chain. During this reaction, the Ser that is part of the protease active site of the proenzyme becomes the pyruvoyl prosthetic group, which constitutes an essential element of the active site of the mature decarboxylase.

It is found in the cell membrane. It carries out the reaction a 1,2-diacyl-sn-glycero-3-phospho-L-serine + H(+) = a 1,2-diacyl-sn-glycero-3-phosphoethanolamine + CO2. The protein operates within phospholipid metabolism; phosphatidylethanolamine biosynthesis; phosphatidylethanolamine from CDP-diacylglycerol: step 2/2. Functionally, catalyzes the formation of phosphatidylethanolamine (PtdEtn) from phosphatidylserine (PtdSer). The sequence is that of Phosphatidylserine decarboxylase proenzyme from Acidovorax ebreus (strain TPSY) (Diaphorobacter sp. (strain TPSY)).